A 156-amino-acid chain; its full sequence is Ribosome maturation factor RimP (156 aa).

Belongs to the RimP family.

It localises to the cytoplasm. Functionally, required for maturation of 30S ribosomal subunits. The chain is Ribosome maturation factor RimP from Bacillus cytotoxicus (strain DSM 22905 / CIP 110041 / 391-98 / NVH 391-98).